We begin with the raw amino-acid sequence, 196 residues long: MCTTFKAAIFDMGGVLFTWNPIVDTQVSLKDLGTIINSETWEQFERGKIEPDDCYHQLGSQIGLPGSEIAATFRQTTGCLRPDARMTSLLRELKGQGVAVYMMTNIPAPDFHQLREMHYEWDLFDGIFASALEGMRKPDLEFYEHVLKQIDTSAAETIFVDDKLENVIAAQAVGMVGLHLTDSLATCMELRQLVGC.

The protein belongs to the HAD-like hydrolase superfamily.

It carries out the reaction (S,S)-drim-8-en-11-yl phosphate + H2O = (S,S)-drim-8-en-11-ol + phosphate. It participates in secondary metabolite biosynthesis; terpenoid biosynthesis. Its function is as follows. Sesquiterpene phosphatase; part of the gene cluster that mediates the biosynthesis of astellolides, drimane-type sesquiterpene esters that show antimicrobial, anti-inflammatory, and anti-tumor activities. The first step in astellolide biosynthesis is performed by the sesquiterpene cyclase astC that catalyzes the formation of drimanyl pyrophosphate from farnesyl pyrophosphate. Drimanyl pyrophosphate is then dephosphorylated by the sesquiterpene phosphatase astI to produce drimanyl monophosphate which is further dephosphorylated to drim-8-ene-11-ol by atsK. Drim-8-ene-11-ol is converted to confertifolin, probably by the cytochrome P450 monooxygenase astD and/or the dehydrogenase astE. The cytochrome P450 monooxygenases astB, astF and astJ then hydroxylate confertifolin at C6, C14, or C15 to form trihydroxy confertifolin. The nonribosomal peptide synthetase astA catalyzes ester bond formation between trihydroxy contifolin and benzoic acid (BA) or 4-hydroxy benzoic acid (4HBA), leading to the formation of dideacetyl astellolides A and B, respectively. Finally, the O-acetyltransferase astG converts dideacetyl astellolides A and B into deacetyl astellolides A and B. The polypeptide is Sesquiterpene phosphatase astK (Aspergillus oryzae (strain ATCC 42149 / RIB 40) (Yellow koji mold)).